Here is an 807-residue protein sequence, read N- to C-terminus: Serine/threonine-protein kinase B-raf (807 aa).

Low complexity-rich tracts occupy residues 1 to 15 (MAAL…GASL) and 110 to 128 (SVSS…SSSL). Disordered stretches follow at residues 1–36 (MAAL…YAGS) and 104–128 (GNGT…SSSL). An RBD domain is found at 155–227 (PIVRVFLPNK…TGEELHVEVL (73 aa)). The Phorbol-ester/DAG-type zinc-finger motif lies at 234–280 (THNFVRKTFFTLAFCDFCRKLLFQGFRCQTCGYKFHQRCSTEVPLMC). Zn(2+) contacts are provided by His-235, Cys-248, Cys-251, Cys-261, Cys-264, His-269, Cys-272, and Cys-280. The span at 303-313 (EETTLGETTPA) shows a compositional bias: polar residues. Disordered stretches follow at residues 303-372 (EETT…VHIN) and 434-494 (STAG…EIPD). Residues 314–328 (SGSYPSVPPSDSVGP) are compositionally biased toward low complexity. 2 stretches are compositionally biased toward basic and acidic residues: residues 348-363 (PADE…RDRS) and 463-487 (QRER…RDSS). A Protein kinase domain is found at 497-757 (ITVGQRIGSG…PQILASIELL (261 aa)). Residues 503 to 511 (IGSGSFGTV) and Lys-523 each bind ATP. Asp-616 functions as the Proton acceptor in the catalytic mechanism. Ser-790 carries the post-translational modification Phosphoserine; by MAPK1. Thr-793 bears the Phosphothreonine; by MAPK1 mark.

Belongs to the protein kinase superfamily. TKL Ser/Thr protein kinase family. RAF subfamily. The cofactor is Zn(2+). In terms of processing, phosphorylated. Expressed preferentially in neural tissue.

It is found in the nucleus. It localises to the cytoplasm. Its subcellular location is the cell membrane. It carries out the reaction L-seryl-[protein] + ATP = O-phospho-L-seryl-[protein] + ADP + H(+). The enzyme catalyses L-threonyl-[protein] + ATP = O-phospho-L-threonyl-[protein] + ADP + H(+). In quiescent cells, maintained in an inactive state via an intramolecular interaction between the protein kinase and N-terminal domains. Following mitogen-mediated cell activation, binds via its RGB domain to active HRAS (GTP-bound) which releases the inhibitory intramolecular interaction between the two domains. This allows the MAP2K1-mediated dimerization of KSR1 or KSR2, and BRAF which activates BRAF. Protein kinase involved in the activation of the MAP signaling cascade. May play a role in transducing specific signals in neural cells. The sequence is that of Serine/threonine-protein kinase B-raf from Coturnix japonica (Japanese quail).